The chain runs to 466 residues: Asparagine--tRNA ligase (466 aa).

This sequence belongs to the class-II aminoacyl-tRNA synthetase family. As to quaternary structure, homodimer.

The protein localises to the cytoplasm. The catalysed reaction is tRNA(Asn) + L-asparagine + ATP = L-asparaginyl-tRNA(Asn) + AMP + diphosphate + H(+). In Salmonella paratyphi A (strain ATCC 9150 / SARB42), this protein is Asparagine--tRNA ligase.